Reading from the N-terminus, the 510-residue chain is Thermostable carboxypeptidase 1 (510 aa).

The region spanning 3-506 (PEAAYQNLLE…FLAYLEKKYA (504 aa)) is the Peptidase M32 domain. The HPF signature appears at 245–247 (HPF). The DXRXT signature appears at 255 to 259 (DVRIT). Residue histidine 276 participates in Zn(2+) binding. The HEXXH motif lies at 276 to 280 (HEMGH). Residue glutamate 277 is the Proton donor/acceptor of the active site. Zn(2+)-binding residues include histidine 280 and glutamate 306. The HES/GQ signature appears at 305-308 (HESQ). Positions 357-362 (IRVEAD) match the I/NRXXA/SD motif. The short motif at 412–419 (GVMQDVHW) is the GXXQDXHW element.

It belongs to the peptidase M32 family. As to quaternary structure, homodimer. The cofactor is Zn(2+).

The enzyme catalyses Release of a C-terminal amino acid with broad specificity, except for -Pro.. Its function is as follows. Broad specificity carboxypetidase that releases amino acids sequentially from the C-terminus, including neutral, aromatic, polar and basic residues, but not Pro. Has lower activity with substrates ending with Gly or Glu. In Thermus thermophilus (strain ATCC 27634 / DSM 579 / HB8), this protein is Thermostable carboxypeptidase 1.